We begin with the raw amino-acid sequence, 289 residues long: Elongation factor Ts (289 aa).

Residues 82 to 85 (TDFL) form an involved in Mg(2+) ion dislocation from EF-Tu region.

This sequence belongs to the EF-Ts family.

It localises to the cytoplasm. Associates with the EF-Tu.GDP complex and induces the exchange of GDP to GTP. It remains bound to the aminoacyl-tRNA.EF-Tu.GTP complex up to the GTP hydrolysis stage on the ribosome. The polypeptide is Elongation factor Ts (Azotobacter vinelandii (strain DJ / ATCC BAA-1303)).